The primary structure comprises 238 residues: Orotidine 5'-phosphate decarboxylase (238 aa).

Residues D18, K40, 67–76, T122, R183, Q192, and R213 each bind substrate; that span reads DMKLLDIDNT. K69 functions as the Proton donor in the catalytic mechanism.

The protein belongs to the OMP decarboxylase family. Type 1 subfamily. In terms of assembly, homodimer.

It catalyses the reaction orotidine 5'-phosphate + H(+) = UMP + CO2. Its pathway is pyrimidine metabolism; UMP biosynthesis via de novo pathway; UMP from orotate: step 2/2. Catalyzes the decarboxylation of orotidine 5'-monophosphate (OMP) to uridine 5'-monophosphate (UMP). The chain is Orotidine 5'-phosphate decarboxylase from Brucella canis (strain ATCC 23365 / NCTC 10854 / RM-666).